The primary structure comprises 445 residues: Histidinol dehydrogenase (445 aa).

Residues tyrosine 130, glutamine 192, and asparagine 215 each coordinate NAD(+). Residues serine 238, glutamine 260, and histidine 263 each contribute to the substrate site. Positions 260 and 263 each coordinate Zn(2+). Residues glutamate 328 and histidine 329 each act as proton acceptor in the active site. Residues histidine 329, aspartate 362, glutamate 416, and histidine 421 each contribute to the substrate site. Aspartate 362 serves as a coordination point for Zn(2+). Histidine 421 is a binding site for Zn(2+).

The protein belongs to the histidinol dehydrogenase family. Zn(2+) serves as cofactor.

The enzyme catalyses L-histidinol + 2 NAD(+) + H2O = L-histidine + 2 NADH + 3 H(+). It participates in amino-acid biosynthesis; L-histidine biosynthesis; L-histidine from 5-phospho-alpha-D-ribose 1-diphosphate: step 9/9. Catalyzes the sequential NAD-dependent oxidations of L-histidinol to L-histidinaldehyde and then to L-histidine. This Gloeobacter violaceus (strain ATCC 29082 / PCC 7421) protein is Histidinol dehydrogenase.